The primary structure comprises 154 residues: ATP synthase subunit b (154 aa).

A helical membrane pass occupies residues 5-27 (LLGQAIAFTLFVWFCMKYVWPPI).

It belongs to the ATPase B chain family. In terms of assembly, F-type ATPases have 2 components, F(1) - the catalytic core - and F(0) - the membrane proton channel. F(1) has five subunits: alpha(3), beta(3), gamma(1), delta(1), epsilon(1). F(0) has three main subunits: a(1), b(2) and c(10-14). The alpha and beta chains form an alternating ring which encloses part of the gamma chain. F(1) is attached to F(0) by a central stalk formed by the gamma and epsilon chains, while a peripheral stalk is formed by the delta and b chains.

The protein localises to the cell inner membrane. In terms of biological role, f(1)F(0) ATP synthase produces ATP from ADP in the presence of a proton or sodium gradient. F-type ATPases consist of two structural domains, F(1) containing the extramembraneous catalytic core and F(0) containing the membrane proton channel, linked together by a central stalk and a peripheral stalk. During catalysis, ATP synthesis in the catalytic domain of F(1) is coupled via a rotary mechanism of the central stalk subunits to proton translocation. Functionally, component of the F(0) channel, it forms part of the peripheral stalk, linking F(1) to F(0). In Aliivibrio fischeri (strain ATCC 700601 / ES114) (Vibrio fischeri), this protein is ATP synthase subunit b.